Here is a 92-residue protein sequence, read N- to C-terminus: Small ribosomal subunit protein uS19 (92 aa).

Belongs to the universal ribosomal protein uS19 family.

Functionally, protein S19 forms a complex with S13 that binds strongly to the 16S ribosomal RNA. The chain is Small ribosomal subunit protein uS19 from Paramagnetospirillum magneticum (strain ATCC 700264 / AMB-1) (Magnetospirillum magneticum).